The sequence spans 270 residues: Hairy and enhancer of split-related protein helt (270 aa).

The disordered stretch occupies residues 1-24 (MNARALYKRPPPVSSSQSEASGKR). One can recognise a bHLH domain in the interval 59–114 (KTPVSHKVIEKRRRDRINRCLNELGKTVPMALAKQNSGKLEKAEILEMTVQYLRAL). The Orange domain maps to 136-171 (FHYGYHECMKNLVHYLTTVERMETKDTKYARILAFL).

This sequence belongs to the HEY family.

Its subcellular location is the nucleus. Functionally, transcriptional repressor which binds preferentially to the canonical E box sequence 5'-CACGCG-3'. This is Hairy and enhancer of split-related protein helt (helt) from Danio rerio (Zebrafish).